The primary structure comprises 332 residues: Large ribosomal subunit protein uL10 (332 aa).

The tract at residues 294–332 (QAAAAPVAVEDNTEEPEEEEEEEEDAAESAAAGLGALFG) is disordered. The span at 304-320 (DNTEEPEEEEEEEEDAA) shows a compositional bias: acidic residues.

The protein belongs to the universal ribosomal protein uL10 family. In terms of assembly, part of the 50S ribosomal subunit. Forms part of the ribosomal stalk which helps the ribosome interact with GTP-bound translation factors. Forms a heptameric L10(L12)2(L12)2(L12)2 complex, where L10 forms an elongated spine to which the L12 dimers bind in a sequential fashion.

Forms part of the ribosomal stalk, playing a central role in the interaction of the ribosome with GTP-bound translation factors. The chain is Large ribosomal subunit protein uL10 from Methanosphaera stadtmanae (strain ATCC 43021 / DSM 3091 / JCM 11832 / MCB-3).